We begin with the raw amino-acid sequence, 362 residues long: Very-long-chain (3R)-3-hydroxyacyl-CoA dehydratase 3 (362 aa).

M1 carries the N-acetylmethionine modification. The Cytoplasmic segment spans residues 1–149 (MENQVLTPHV…ETLTSLKKGY (149 aa)). The CS domain occupies 5–94 (VLTPHVYWAQ…KESQWWERLT (90 aa)). Phosphothreonine is present on T7. Positions 111–136 (LDESDAEMELRAKEEEQLNKLRLESQ) form a coiled coil. Phosphoserine is present on residues S114 and S135. Residues 150–170 (LFMYNLVQFLGFSWIFVNMTV) traverse the membrane as a helical segment. Over 171-189 (RFFILGKESFYDTFHTVAD) the chain is Lumenal. The helical transmembrane segment at 190–210 (MMYFCQMLAAVESINAAIGVT) threads the bilayer. The Cytoplasmic portion of the chain corresponds to 211–212 (KS). A helical transmembrane segment spans residues 213–233 (PVVPSLFQLLGRNFILFIIFG). Over 234 to 242 (TMEEMQNKA) the chain is Lumenal. The helical transmembrane segment at 243–263 (VVFFVFYIWSTVEIFRYPFYM) threads the bilayer. Topologically, residues 264-280 (LSCIDMDWKVLTWLRYT) are cytoplasmic. Residues 281-301 (VWIPLYPMGCLAEAVSVIQSI) traverse the membrane as a helical segment. Active-site residues include Y286 and E293. The Lumenal segment spans residues 302–325 (PVFNETGRFSFTLPYPVKIKVRFS). Residues 326-346 (FFLQIYLILLFLGLYVNFRYL) traverse the membrane as a helical segment. At 347–362 (YKQRRRRFGQKKKKIH) the chain is on the cytoplasmic side.

It belongs to the very long-chain fatty acids dehydratase HACD family. May interact with enzymes of the ELO family (including ELOVL1); with those enzymes that mediate condensation, the first of the four steps of the reaction cycle responsible for fatty acids elongation, may be part of a larger fatty acids elongase complex. Interacts with RAC1. Associates with internalized insulin receptor/INSR complexes on Golgi/endosomal membranes; HACD3/PTPLAD1 together with ATIC and PRKAA2/AMPK2 is proposed to be part of a signaling network regulating INSR autophosphorylation and endocytosis.

The protein localises to the endoplasmic reticulum membrane. It carries out the reaction a very-long-chain (3R)-3-hydroxyacyl-CoA = a very-long-chain (2E)-enoyl-CoA + H2O. It catalyses the reaction (3R)-hydroxyhexadecanoyl-CoA = (2E)-hexadecenoyl-CoA + H2O. It participates in lipid metabolism; fatty acid biosynthesis. Catalyzes the third of the four reactions of the long-chain fatty acids elongation cycle. This endoplasmic reticulum-bound enzymatic process, allows the addition of two carbons to the chain of long- and very long-chain fatty acids/VLCFAs per cycle. This enzyme catalyzes the dehydration of the 3-hydroxyacyl-CoA intermediate into trans-2,3-enoyl-CoA, within each cycle of fatty acid elongation. Thereby, it participates in the production of VLCFAs of different chain lengths that are involved in multiple biological processes as precursors of membrane lipids and lipid mediators. Involved in Rac1-signaling pathways leading to the modulation of gene expression. Promotes insulin receptor/INSR autophosphorylation and is involved in INSR internalization. The polypeptide is Very-long-chain (3R)-3-hydroxyacyl-CoA dehydratase 3 (Bos taurus (Bovine)).